The following is a 191-amino-acid chain: dTTP/UTP pyrophosphatase (191 aa).

Catalysis depends on D75, which acts as the Proton acceptor.

This sequence belongs to the Maf family. YhdE subfamily. A divalent metal cation is required as a cofactor.

The protein localises to the cytoplasm. It carries out the reaction dTTP + H2O = dTMP + diphosphate + H(+). It catalyses the reaction UTP + H2O = UMP + diphosphate + H(+). In terms of biological role, nucleoside triphosphate pyrophosphatase that hydrolyzes dTTP and UTP. May have a dual role in cell division arrest and in preventing the incorporation of modified nucleotides into cellular nucleic acids. The chain is dTTP/UTP pyrophosphatase from Aliivibrio fischeri (strain ATCC 700601 / ES114) (Vibrio fischeri).